Consider the following 295-residue polypeptide: Indole-3-glycerol phosphate synthase (295 aa).

It belongs to the TrpC family.

It catalyses the reaction 1-(2-carboxyphenylamino)-1-deoxy-D-ribulose 5-phosphate + H(+) = (1S,2R)-1-C-(indol-3-yl)glycerol 3-phosphate + CO2 + H2O. The protein operates within amino-acid biosynthesis; L-tryptophan biosynthesis; L-tryptophan from chorismate: step 4/5. The sequence is that of Indole-3-glycerol phosphate synthase from Prochlorococcus marinus (strain NATL1A).